The sequence spans 480 residues: Coronin-2B (480 aa).

7 WD repeats span residues 29 to 77 (HCFD…GRIE), 78 to 127 (PNYP…RNMT), 128 to 170 (EALL…LDVG), 171 to 212 (EPVK…PRSG), 213 to 259 (RVLQ…EDLS), 260 to 305 (MPLI…TEKP), and 306 to 345 (YLSY…KLVT). Positions 436-479 (NELLRMFFRQQDEIRRLKEELAQKDIRIRQLQLELKNLRNSPKN) form a coiled coil.

The protein belongs to the WD repeat coronin family. Binds to F-actin and to vinculin. In terms of tissue distribution, expressed predominantly in brain.

Its subcellular location is the cytoplasm. It is found in the cytoskeleton. Its function is as follows. May play a role in the reorganization of neuronal actin structure. This Homo sapiens (Human) protein is Coronin-2B (CORO2B).